A 1343-amino-acid polypeptide reads, in one-letter code: MVYSYSEKKRIRKDFGKRPQVLDIPYLLSIQLDSFKKFTDQDPTGERGLEAAFRSVFPIKSFSGNSELQYVSYKLGEPVFDVKECQIRGVTYSAPLRVKLRMVLYDREAAAGTVKDIKEQEVYMGDIPLMTDNGTFVINGTERVIVSQLHRSPGVFFDHDRGKTHSSGKVLYNARIIPYRGSWLDFEFDPKDALFVRIDRRRKLPATIILRALEYSTQEILDLFFERVEFKIKKDTLVMALVPERLRGETASYDIKDAEGSVLVEAGRRITARHIRQLEKTNTTELEVPVEYIVGKYAAQDYIDPDTGEVLVSANSEISLEDLAKLSLAGIKDISTLYINELDHGAYISDTLRIDSTTNRLEALVEIYRMMRPGEPPTKDAAEALFQNLFFSEERYDLSKVGRMKFNRRLSIPDDEGSGVLSKEDIVAVMKNIIHIRNGFDEVDDIDHLGNRRIRSVGEMAENQFRVGLVRVERAVRERLSLGDLNELMPQDLINAKPISAAVKEFFGSSQLSQFMDQNNPLSEVTHKRRISALGPGGLTRERAGFEVRDVHPTHYGRLCPIETPEGPNIGLINSLASFARTNSYGFLETPYRKVIDGVITDEVEYLSAIEEGRYVIAQANIEVDANGRMVEEQIACRHKGESTFMRASDIQYMDVSPQQIISVAASLIPFLEHDDANRALMGANMQRQAVPTLRSEKPLVGTGIERTLAVDSGVVVVAKRGGYIDYVDASRIVVKVNEDELRPGEAGIDIYNLTKYTRSNQNTCINQRPCCAVGEPVVRGDVLADGPSTDLGDLALGQNMRIAFMPWNGYNFEDSILISERVAQEDRFTTIHIQELSCIARDTKLGSEEITADIPNVGESALSKLDESGIVYIGAEVKGGDILVGKVTPKGETQLTPEEKLLRAIFGEKASDVKDSSLRVPNSVKGTIIDVQVFTRDGVEKDKRAVEIEEMHIAQARKDLSEEFKILEEGVLSRARNLLLGAGFTETQIAAMPRKDVLVQVIDDEAKQTELEQLAEQHEELKADFDKKFEIKRRKITQGDDLAPGVLKIVKVYLAVKRTIQPGDKMAGRHGNKGVISKICPIEDMPYDEQGNPVDIVLNPLGVPSRMNIGQVLEVHMGAAAKGIGNKITAMLEEQRELAEVRGYIKQVYELGDEVQQRVDIDSFTDDEVMRLAQNLKGGIPIATPAFDGAKEKEIKQMLELAGLPTSGQLKLYDGRTGNEFERQVTVGYMYMLKLNHLVDDKMHARSTGSYSLVTQQPLGGKAQFGGQRFGEMEVWALEAYGAAYTLQEMLTVKSDDVNGRTQMYKNIVDGNHQMQPGMPESFNVLLKEIRSLGINIELDQE.

This sequence belongs to the RNA polymerase beta chain family. As to quaternary structure, the RNAP catalytic core consists of 2 alpha, 1 beta, 1 beta' and 1 omega subunit. When a sigma factor is associated with the core the holoenzyme is formed, which can initiate transcription.

It carries out the reaction RNA(n) + a ribonucleoside 5'-triphosphate = RNA(n+1) + diphosphate. DNA-dependent RNA polymerase catalyzes the transcription of DNA into RNA using the four ribonucleoside triphosphates as substrates. The polypeptide is DNA-directed RNA polymerase subunit beta (Shewanella sp. (strain W3-18-1)).